Consider the following 96-residue polypeptide: MGWIQEQPGGSIRFRIRVQPRASKNEVCGLLDDALKVRLTAPPVDGEANAACLQFIAKTLGLSRSQVRLVAGETSRLKTLEVEGVSAEDLRKRFDI.

The protein belongs to the UPF0235 family.

The polypeptide is UPF0235 protein Helmi_20270 (Heliobacterium modesticaldum (strain ATCC 51547 / Ice1)).